The primary structure comprises 757 residues: uncharacterized protein (757 aa).

In terms of domain architecture, S1 motif spans 640-709; that stretch reads GMILEGVVSN…ARKRIALTMR (70 aa). Residues 711-741 are compositionally biased toward basic and acidic residues; that stretch reads DDEPGGAKHKMPSENRSRERTAGRKPQRNDR. A disordered region spans residues 711 to 757; sequence DDEPGGAKHKMPSENRSRERTAGRKPQRNDRAPANSAMADAFAKLKR.

This is an uncharacterized protein from Neisseria meningitidis serogroup B (strain ATCC BAA-335 / MC58).